Consider the following 257-residue polypeptide: uncharacterized protein (257 aa).

7–14 is a binding site for ATP; the sequence is GKGGVGKT.

The protein to M.jannaschii MJ0084 and MJ0685.

This is an uncharacterized protein from Methanocaldococcus jannaschii (strain ATCC 43067 / DSM 2661 / JAL-1 / JCM 10045 / NBRC 100440) (Methanococcus jannaschii).